The following is a 375-amino-acid chain: Protein arginine N-methyltransferase 6 (375 aa).

The segment at 1–36 (MSQPKRRKLESGGGGEGGEGTEEEDGGELEVAVPRP) is disordered. The segment covering 19-28 (EGTEEEDGGE) has biased composition (acidic residues). Position 21 is a phosphothreonine (Thr-21). The residue at position 38 (Arg-38) is an Asymmetric dimethylarginine; by autocatalysis. The SAM-dependent MTase PRMT-type domain maps to 44-374 (DQLYYQCYSD…EEKTKDFAME (331 aa)). Residues His-57, Arg-66, Gly-90, Glu-112, and Glu-141 each coordinate S-adenosyl-L-methionine. Residues Glu-155 and Glu-164 contribute to the active site.

This sequence belongs to the class I-like SAM-binding methyltransferase superfamily. Protein arginine N-methyltransferase family. PRMT6 subfamily. As to quaternary structure, interacts with (and methylates) HIV-1 Tat, Rev and Nucleocapsid protein p7 (NC). Interacts with EPB41L3 and NCOA1. Automethylation enhances its stability.

The protein localises to the nucleus. It catalyses the reaction L-arginyl-[protein] + 2 S-adenosyl-L-methionine = N(omega),N(omega)-dimethyl-L-arginyl-[protein] + 2 S-adenosyl-L-homocysteine + 2 H(+). Its function is as follows. Arginine methyltransferase that can catalyze the formation of both omega-N monomethylarginine (MMA) and asymmetrical dimethylarginine (aDMA), with a strong preference for the formation of aDMA. Preferentially methylates arginyl residues present in a glycine and arginine-rich domain and displays preference for monomethylated substrates. Specifically mediates the asymmetric dimethylation of histone H3 'Arg-2' to form H3R2me2a. H3R2me2a represents a specific tag for epigenetic transcriptional repression and is mutually exclusive with methylation on histone H3 'Lys-4' (H3K4me2 and H3K4me3). Acts as a transcriptional repressor of various genes such as HOXA2, THBS1 and TP53. Repression of TP53 blocks cellular senescence. Also methylates histone H2A and H4 'Arg-3' (H2AR3me and H4R3me, respectively). Acts as a regulator of DNA base excision during DNA repair by mediating the methylation of DNA polymerase beta (POLB), leading to the stimulation of its polymerase activity by enhancing DNA binding and processivity. Methylates HMGA1. Regulates alternative splicing events. Acts as a transcriptional coactivator of a number of steroid hormone receptors including ESR1, ESR2, PGR and NR3C1. Promotes fasting-induced transcriptional activation of the gluconeogenic program through methylation of the CRTC2 transcription coactivator. Methylates GPS2, protecting GPS2 from ubiquitination and degradation. Methylates SIRT7, inhibiting SIRT7 histone deacetylase activity and promoting mitochondria biogenesis. The polypeptide is Protein arginine N-methyltransferase 6 (PRMT6) (Bos taurus (Bovine)).